Here is a 476-residue protein sequence, read N- to C-terminus: Calcium/calmodulin-dependent protein kinase type 1G (476 aa).

Residues 23 to 277 form the Protein kinase domain; the sequence is FIFMEVLGSG…CEKALRHPWI (255 aa). Residues 29-37 and K52 contribute to the ATP site; that span reads LGSGAFSEV. D143 (proton acceptor) is an active-site residue. The tract at residues 277–317 is autoinhibitory domain; it reads IDGNTALHRDIYPSVSLQIQKNFAKSKWRQAFNAAAVVHHM. Positions 297–318 are calmodulin-binding; it reads KNFAKSKWRQAFNAAAVVHHMR. A disordered region spans residues 326 to 387; that stretch reads SPSVRQEVEN…SSRPSAPGGR (62 aa).

This sequence belongs to the protein kinase superfamily. CAMK Ser/Thr protein kinase family. CaMK subfamily. Prenylated on Cys-473.

The protein localises to the cytoplasm. It is found in the golgi apparatus membrane. Its subcellular location is the cell membrane. The enzyme catalyses L-seryl-[protein] + ATP = O-phospho-L-seryl-[protein] + ADP + H(+). It catalyses the reaction L-threonyl-[protein] + ATP = O-phospho-L-threonyl-[protein] + ADP + H(+). With respect to regulation, activated by Ca(2+)/calmodulin. Binding of calmodulin is thought to result in a conformational change and leads to activation through phosphorylation by CAMKK1. Its function is as follows. Calcium/calmodulin-dependent protein kinase belonging to a proposed calcium-triggered signaling cascade. In vitro phosphorylates transcription factor CREB1. The protein is Calcium/calmodulin-dependent protein kinase type 1G (Camk1g) of Rattus norvegicus (Rat).